A 353-amino-acid polypeptide reads, in one-letter code: Paraneoplastic antigen Ma1 homolog (353 aa).

It belongs to the PNMA family. Predominantly expressed in testis. Very low levels in the brain, including in the piriform cortex, hippocampus and some subcortical nuclei.

The protein resides in the nucleus. It is found in the nucleolus. The protein is Paraneoplastic antigen Ma1 homolog (Pnma1) of Mus musculus (Mouse).